We begin with the raw amino-acid sequence, 321 residues long: MKPTFLDFEQPIAELENKIEELRFVQDDSVLDISEEIARLQKKSLELTKTLYAKLTPSQIAMVARHPQRPYTLDYIQAIFTDFEELHGDRAFADDAAIVGGLARFNGQSVMVIGHQKGRDTKEKIRRNFGMPHPEGYRKALRLMKLAEKFGIPVLTFVDTTGAWPGIGAEERGQSEAIGRNLYEMTNLRVPIVVTVIGEGGSGGALAIAVGDHVNMLQYATYSVISPEGCASILWKTAERASDAAEALGITAPRLKTLGLIDRVVTEPVGGAHRDHAQMMTTLKRVLQDQLKEVQSKPMDALLKERFDRLMSYGRFKEDAA.

Residues 32–293 (DISEEIARLQ…KRVLQDQLKE (262 aa)) enclose the CoA carboxyltransferase C-terminal domain.

The protein belongs to the AccA family. In terms of assembly, acetyl-CoA carboxylase is a heterohexamer composed of biotin carboxyl carrier protein (AccB), biotin carboxylase (AccC) and two subunits each of ACCase subunit alpha (AccA) and ACCase subunit beta (AccD).

Its subcellular location is the cytoplasm. The catalysed reaction is N(6)-carboxybiotinyl-L-lysyl-[protein] + acetyl-CoA = N(6)-biotinyl-L-lysyl-[protein] + malonyl-CoA. The protein operates within lipid metabolism; malonyl-CoA biosynthesis; malonyl-CoA from acetyl-CoA: step 1/1. Functionally, component of the acetyl coenzyme A carboxylase (ACC) complex. First, biotin carboxylase catalyzes the carboxylation of biotin on its carrier protein (BCCP) and then the CO(2) group is transferred by the carboxyltransferase to acetyl-CoA to form malonyl-CoA. The polypeptide is Acetyl-coenzyme A carboxylase carboxyl transferase subunit alpha (Chromobacterium violaceum (strain ATCC 12472 / DSM 30191 / JCM 1249 / CCUG 213 / NBRC 12614 / NCIMB 9131 / NCTC 9757 / MK)).